A 154-amino-acid polypeptide reads, in one-letter code: Myoglobin (154 aa).

The region spanning 2–148 (GLSDGEWQLV…FRNDIAAKYK (147 aa)) is the Globin domain. Residue Ser4 is modified to Phosphoserine. His65 is a binding site for nitrite. Residue His65 participates in O2 binding. Phosphothreonine is present on Thr68. His94 contacts heme b.

It belongs to the globin family. Monomeric.

It localises to the cytoplasm. Its subcellular location is the sarcoplasm. It carries out the reaction Fe(III)-heme b-[protein] + nitric oxide + H2O = Fe(II)-heme b-[protein] + nitrite + 2 H(+). The catalysed reaction is H2O2 + AH2 = A + 2 H2O. In terms of biological role, monomeric heme protein which primary function is to store oxygen and facilitate its diffusion within muscle tissues. Reversibly binds oxygen through a pentacoordinated heme iron and enables its timely and efficient release as needed during periods of heightened demand. Depending on the oxidative conditions of tissues and cells, and in addition to its ability to bind oxygen, it also has a nitrite reductase activity whereby it regulates the production of bioactive nitric oxide. Under stress conditions, like hypoxia and anoxia, it also protects cells against reactive oxygen species thanks to its pseudoperoxidase activity. The polypeptide is Myoglobin (MB) (Otolemur crassicaudatus (Brown greater galago)).